The primary structure comprises 62 residues: DNA-binding protein 7b (62 aa).

This sequence belongs to the 7 kDa DNA-binding/endoribonuclease P2 family. In terms of assembly, monomer.

The protein localises to the cytoplasm. Functionally, can constrain negative DNA supercoils. May be involved in maintaining the integrity of the genome at high temperature. The polypeptide is DNA-binding protein 7b (Acidianus hospitalis (strain W1)).